The sequence spans 238 residues: tRNA (guanine-N(7)-)-methyltransferase (238 aa).

S-adenosyl-L-methionine contacts are provided by E68, E93, D120, and D143. D143 is a catalytic residue. Substrate-binding positions include K147, D179, and 216-219 (TKFE).

This sequence belongs to the class I-like SAM-binding methyltransferase superfamily. TrmB family.

It carries out the reaction guanosine(46) in tRNA + S-adenosyl-L-methionine = N(7)-methylguanosine(46) in tRNA + S-adenosyl-L-homocysteine. It functions in the pathway tRNA modification; N(7)-methylguanine-tRNA biosynthesis. In terms of biological role, catalyzes the formation of N(7)-methylguanine at position 46 (m7G46) in tRNA. The sequence is that of tRNA (guanine-N(7)-)-methyltransferase from Ectopseudomonas mendocina (strain ymp) (Pseudomonas mendocina).